We begin with the raw amino-acid sequence, 465 residues long: Ribulose bisphosphate carboxylase large chain (465 aa).

Lysine 4 is subject to N6,N6,N6-trimethyllysine. Substrate-binding residues include asparagine 113 and threonine 163. Lysine 165 serves as the catalytic Proton acceptor. Lysine 167 is a binding site for substrate. Residues lysine 191, aspartate 193, and glutamate 194 each coordinate Mg(2+). Position 191 is an N6-carboxylysine (lysine 191). Histidine 284 (proton acceptor) is an active-site residue. Residues arginine 285, histidine 317, and serine 369 each contribute to the substrate site.

Belongs to the RuBisCO large chain family. Type I subfamily. In terms of assembly, heterohexadecamer of 8 large chains and 8 small chains; disulfide-linked. The disulfide link is formed within the large subunit homodimers. Requires Mg(2+) as cofactor. Post-translationally, the disulfide bond which can form in the large chain dimeric partners within the hexadecamer appears to be associated with oxidative stress and protein turnover.

It localises to the plastid. Its subcellular location is the chloroplast. It carries out the reaction 2 (2R)-3-phosphoglycerate + 2 H(+) = D-ribulose 1,5-bisphosphate + CO2 + H2O. The enzyme catalyses D-ribulose 1,5-bisphosphate + O2 = 2-phosphoglycolate + (2R)-3-phosphoglycerate + 2 H(+). Its function is as follows. RuBisCO catalyzes two reactions: the carboxylation of D-ribulose 1,5-bisphosphate, the primary event in carbon dioxide fixation, as well as the oxidative fragmentation of the pentose substrate in the photorespiration process. Both reactions occur simultaneously and in competition at the same active site. The protein is Ribulose bisphosphate carboxylase large chain of Idesia polycarpa (Iigiri tree).